The chain runs to 566 residues: Proline--tRNA ligase (566 aa).

It belongs to the class-II aminoacyl-tRNA synthetase family. ProS type 1 subfamily. Homodimer.

The protein localises to the cytoplasm. It catalyses the reaction tRNA(Pro) + L-proline + ATP = L-prolyl-tRNA(Pro) + AMP + diphosphate. Its function is as follows. Catalyzes the attachment of proline to tRNA(Pro) in a two-step reaction: proline is first activated by ATP to form Pro-AMP and then transferred to the acceptor end of tRNA(Pro). As ProRS can inadvertently accommodate and process non-cognate amino acids such as alanine and cysteine, to avoid such errors it has two additional distinct editing activities against alanine. One activity is designated as 'pretransfer' editing and involves the tRNA(Pro)-independent hydrolysis of activated Ala-AMP. The other activity is designated 'posttransfer' editing and involves deacylation of mischarged Ala-tRNA(Pro). The misacylated Cys-tRNA(Pro) is not edited by ProRS. This is Proline--tRNA ligase from Staphylococcus saprophyticus subsp. saprophyticus (strain ATCC 15305 / DSM 20229 / NCIMB 8711 / NCTC 7292 / S-41).